The sequence spans 452 residues: MSERSVYMVLSPRFSVRAVSLAVAAVSASLSMPTSASMGNLGTSYGVMPVDVATAQSLSMFNEQVSATYYNPAALTKDPRGELTAGILHSEQELRSDNPNASGDIVSDSPSQHVLIGMKTNLGSLTRFGHPIYLGFIAGVEKYGKEMLAFSSETSESGQFLQYGKEPLFLNIGGATPIWRGISAGASVRVTLEATANLDAVSTLGGETSRERLAVNAEPSLKTILGTNIDLGSTFCPESDCFLNGWETALTYRTKSSASTTVDSNIIVTQTIPDPGLSLAVTTIDSFQPETIAIGTQYSGDGWRIGGSIEQQNWSELEDEFSGDSIKDQGSVASGNRIGFDDILIPRLGAEYQLNKNFAVRGGVAYEESPLKTTRNPELNYLDTDKLVVGLGISATYDRTRLLAYPVRLDLGYQYQQLQERDFTVVDYDGDETSVTADGDIHVFSGSITLKF.

The first 36 residues, 1–36, serve as a signal peptide directing secretion; it reads MSERSVYMVLSPRFSVRAVSLAVAAVSASLSMPTSA.

This sequence belongs to the OmpP1/FadL family. Interacts with the inner membrane protein AupB.

The protein localises to the cell outer membrane. Its function is as follows. Required for growth on alkanes. Probably involved in the uptake of micelle-solubilized alkanes. This Marinobacter nauticus (strain ATCC 49840 / DSM 8798 / CIP 103578 / SP17) (Marinobacter hydrocarbonoclasticus) protein is Alkane uptake protein A.